The following is a 205-amino-acid chain: Carboxysome shell protein CsoS1D (205 aa).

2 BMC circularly permuted domains span residues 3–100 (ELRT…TREY) and 106–205 (VVMW…TCRS). The Gates the pore signature appears at 68–69 (ER).

The protein belongs to the EutL/PduB family. Homotrimer. Forms a dimer of stacked trimers, the same faces interact. Probably forms a CsoS1-CsoS1D-CsoS2 complex.

The protein resides in the carboxysome. Its function is as follows. Part of the carboxysome shell, a polyhedral inclusion where RuBisCO (ribulose bisphosphate carboxylase, cbbL-cbbS) is sequestered. It may control transport of RuBisCO reactants in and out of the carboxysome. In Hydrogenovibrio crunogenus (strain DSM 25203 / XCL-2) (Thiomicrospira crunogena), this protein is Carboxysome shell protein CsoS1D.